We begin with the raw amino-acid sequence, 37 residues long: U12-myrmicitoxin-Mri1a (37 aa).

Residues 1-23 (MKTIELITIFAMITTLMVTVVAG) form the signal peptide. A propeptide spanning residues 24–25 (DP) is cleaved from the precursor. Residue V35 is modified to Valine amide.

Expressed by the venom gland.

It is found in the secreted. Functionally, toxin that induces mild paralysis, and reduces survival and reproduction when injected into aphids (A.pisum). May affect various processes in the aphid, including wound healing and hemolymph coagulation. It does not increase the sensitivity of the aphids to the chemical insecticides imidacloprid, methomyl and Spirotetramat. Has no insecticidal activity when injected into blowfly (L.caesar). Does not display any antibacterial or antifungal activity. The sequence is that of U12-myrmicitoxin-Mri1a from Manica rubida (European giant red ant).